The chain runs to 516 residues: Cytochrome P450 1A2 (516 aa).

O-linked (GlcNAc) serine glycosylation occurs at serine 69. Phenylalanine 226 contributes to the substrate binding site. Residue cysteine 458 coordinates heme.

This sequence belongs to the cytochrome P450 family. Interacts with PGRMC1; the interaction requires PGRMC1 homodimerization. Heme is required as a cofactor.

The protein resides in the endoplasmic reticulum membrane. It localises to the microsome membrane. The enzyme catalyses an organic molecule + reduced [NADPH--hemoprotein reductase] + O2 = an alcohol + oxidized [NADPH--hemoprotein reductase] + H2O + H(+). The catalysed reaction is 17beta-estradiol + reduced [NADPH--hemoprotein reductase] + O2 = 2-hydroxy-17beta-estradiol + oxidized [NADPH--hemoprotein reductase] + H2O + H(+). It carries out the reaction 17beta-estradiol + reduced [NADPH--hemoprotein reductase] + O2 = 4-hydroxy-17beta-estradiol + oxidized [NADPH--hemoprotein reductase] + H2O + H(+). It catalyses the reaction estrone + reduced [NADPH--hemoprotein reductase] + O2 = 2-hydroxyestrone + oxidized [NADPH--hemoprotein reductase] + H2O + H(+). The enzyme catalyses estrone + reduced [NADPH--hemoprotein reductase] + O2 = 4-hydroxyestrone + oxidized [NADPH--hemoprotein reductase] + H2O + H(+). The catalysed reaction is cholesterol + reduced [NADPH--hemoprotein reductase] + O2 = 25-hydroxycholesterol + oxidized [NADPH--hemoprotein reductase] + H2O + H(+). It carries out the reaction all-trans-retinol + reduced [NADPH--hemoprotein reductase] + O2 = all-trans-retinal + oxidized [NADPH--hemoprotein reductase] + 2 H2O + H(+). It catalyses the reaction all-trans-retinal + reduced [NADPH--hemoprotein reductase] + O2 = all-trans-retinoate + oxidized [NADPH--hemoprotein reductase] + H2O + 2 H(+). The enzyme catalyses (5Z,8Z,11Z,14Z)-eicosatetraenoate + reduced [NADPH--hemoprotein reductase] + O2 = (14R,15S)-epoxy-(5Z,8Z,11Z)-eicosatrienoate + oxidized [NADPH--hemoprotein reductase] + H2O + H(+). The catalysed reaction is (5Z,8Z,11Z,14Z)-eicosatetraenoate + reduced [NADPH--hemoprotein reductase] + O2 = (14S,15R)-epoxy-(5Z,8Z,11Z)-eicosatrienoate + oxidized [NADPH--hemoprotein reductase] + H2O + H(+). It carries out the reaction (5Z,8Z,11Z,14Z,17Z)-eicosapentaenoate + reduced [NADPH--hemoprotein reductase] + O2 = (17R,18S)-epoxy-(5Z,8Z,11Z,14Z)-eicosatetraenoate + oxidized [NADPH--hemoprotein reductase] + H2O + H(+). It catalyses the reaction (4Z,7Z,10Z,13Z,16Z,19Z)-docosahexaenoate + reduced [NADPH--hemoprotein reductase] + O2 = (19R,20S)-epoxy-(4Z,7Z,10Z,13Z,16Z)-docosapentaenoate + oxidized [NADPH--hemoprotein reductase] + H2O + H(+). The enzyme catalyses (5S)-hydroperoxy-(6E,8Z,11Z,14Z)-eicosatetraenoate = 5-oxo-(6E,8Z,11Z,14Z)-eicosatetraenoate + H2O. The catalysed reaction is (12S)-hydroperoxy-(5Z,8Z,10E,14Z)-eicosatetraenoate = 12-oxo-(5Z,8Z,10E,14Z)-eicosatetraenoate + H2O. It carries out the reaction (15S)-hydroperoxy-(5Z,8Z,11Z,13E)-eicosatetraenoate = 15-oxo-(5Z,8Z,11Z,13E)-eicosatetraenoate + H2O. It catalyses the reaction (13S)-hydroperoxy-(9Z,11E)-octadecadienoate = 13-oxo-(9Z,11E)-octadecadienoate + H2O. The enzyme catalyses (5Z,8Z,11Z,14Z)-eicosatetraenoate + reduced [NADPH--hemoprotein reductase] + O2 = 13-hydroxy-(5Z,8Z,11Z,14Z)-eicosatetraenoate + oxidized [NADPH--hemoprotein reductase] + H2O + H(+). The catalysed reaction is (5Z,8Z,11Z,14Z)-eicosatetraenoate + reduced [NADPH--hemoprotein reductase] + O2 = 19-hydroxy-(5Z,8Z,11Z,14Z)-eicosatetraenoate + oxidized [NADPH--hemoprotein reductase] + H2O + H(+). It carries out the reaction (9Z,12Z)-octadecadienoate + reduced [NADPH--hemoprotein reductase] + O2 = 11-hydroxy-(9Z,12Z)-octadecadienoate + oxidized [NADPH--hemoprotein reductase] + H2O + H(+). It participates in cofactor metabolism; retinol metabolism. Its pathway is steroid metabolism; cholesterol metabolism. It functions in the pathway lipid metabolism; arachidonate metabolism. A cytochrome P450 monooxygenase involved in the metabolism of various endogenous substrates, including fatty acids, steroid hormones and vitamins. Mechanistically, uses molecular oxygen inserting one oxygen atom into a substrate, and reducing the second into a water molecule, with two electrons provided by NADPH via cytochrome P450 reductase (NADPH--hemoprotein reductase). Catalyzes the hydroxylation of carbon-hydrogen bonds. Exhibits high catalytic activity for the formation of hydroxyestrogens from estrone (E1) and 17beta-estradiol (E2), namely 2-hydroxy E1 and E2. Metabolizes cholesterol toward 25-hydroxycholesterol, a physiological regulator of cellular cholesterol homeostasis. May act as a major enzyme for all-trans retinoic acid biosynthesis in the liver. Catalyzes two successive oxidative transformation of all-trans retinol to all-trans retinal and then to the active form all-trans retinoic acid. Primarily catalyzes stereoselective epoxidation of the last double bond of polyunsaturated fatty acids (PUFA), displaying a strong preference for the (R,S) stereoisomer. Catalyzes bisallylic hydroxylation and omega-1 hydroxylation of PUFA. May also participate in eicosanoids metabolism by converting hydroperoxide species into oxo metabolites (lipoxygenase-like reaction, NADPH-independent). Plays a role in the oxidative metabolism of xenobiotics. Catalyzes the N-hydroxylation of heterocyclic amines and the O-deethylation of phenacetin. Metabolizes caffeine via N3-demethylation. This is Cytochrome P450 1A2 (CYP1A2) from Balaenoptera acutorostrata (Common minke whale).